We begin with the raw amino-acid sequence, 199 residues long: 3-isopropylmalate dehydratase small subunit (199 aa).

Belongs to the LeuD family. LeuD type 1 subfamily. As to quaternary structure, heterodimer of LeuC and LeuD.

It catalyses the reaction (2R,3S)-3-isopropylmalate = (2S)-2-isopropylmalate. The protein operates within amino-acid biosynthesis; L-leucine biosynthesis; L-leucine from 3-methyl-2-oxobutanoate: step 2/4. Functionally, catalyzes the isomerization between 2-isopropylmalate and 3-isopropylmalate, via the formation of 2-isopropylmaleate. The chain is 3-isopropylmalate dehydratase small subunit from Mycobacteroides abscessus (strain ATCC 19977 / DSM 44196 / CCUG 20993 / CIP 104536 / JCM 13569 / NCTC 13031 / TMC 1543 / L948) (Mycobacterium abscessus).